The chain runs to 471 residues: Putative multidrug resistance protein MdtD (471 aa).

Residues 1–11 (MTDLPDSTRWQ) lie on the Periplasmic side of the membrane. The chain crosses the membrane as a helical span at residues 12–32 (LWIVAFGFFMQSLDTTIVNTA). Residues 33 to 48 (LPSMAQSLGESPLHMH) lie on the Cytoplasmic side of the membrane. A helical transmembrane segment spans residues 49 to 69 (MVIVSYVLTVAVMLPASGWLA). The Periplasmic segment spans residues 70–76 (DKVGVRN). Residues 77 to 97 (IFFTAIVLFTLGSLFCALSGT) traverse the membrane as a helical segment. The Cytoplasmic segment spans residues 98–101 (LNEL). A helical membrane pass occupies residues 102 to 124 (LLARALQGVGGAMMVPVGRLTVM). Residues 125–137 (KIVPREQYMAAMT) lie on the Periplasmic side of the membrane. The helical transmembrane segment at 138-158 (FVTLPGQVGPLLGPALGGLLV) threads the bilayer. Residues 159–164 (EYASWH) lie on the Cytoplasmic side of the membrane. Residues 165-185 (WIFLINIPVGIIGAIATLMLM) form a helical membrane-spanning segment. Residues 186–196 (PNYTMQTRRFD) are Periplasmic-facing. Residues 197–217 (LSGFLLLAVGMAVLTLALDGS) traverse the membrane as a helical segment. Over 218-224 (KGTGFSP) the chain is Cytoplasmic. Residues 225-245 (LAIAGLVAVGVVALVLYLLHA) traverse the membrane as a helical segment. Residues 246 to 262 (QNNNRALFSLKLFRTRT) are Periplasmic-facing. Residues 263 to 283 (FSLGLAGSFAGRIGSGMLPFM) form a helical membrane-spanning segment. At 284-285 (TP) the chain is on the cytoplasmic side. A helical transmembrane segment spans residues 286 to 306 (VFLQIGLGFSPFHAGLMMIPM). The Periplasmic segment spans residues 307 to 341 (VLGSMGMKRIVVQVVNRFGYRRVLVATTLGLSLVT). A helical membrane pass occupies residues 342–362 (LLFMTTALLGWYYVLPFVLFL). Residues 363–395 (QGMVNSTRFSSMNTLTLKDLPDNLASSGNSLLS) lie on the Cytoplasmic side of the membrane. A helical membrane pass occupies residues 396–416 (MIMQLSMSIGVTIAGLLLGLF). At 417–430 (GSQHVSVDSGTTQT) the chain is on the periplasmic side. The helical transmembrane segment at 431-451 (VFMYTWLSMAFIIALPAFVFA) threads the bilayer. The Cytoplasmic segment spans residues 452–471 (RVPSDTHQNVAISRRKRSAQ).

The protein belongs to the major facilitator superfamily. TCR/Tet family.

It localises to the cell inner membrane. This is Putative multidrug resistance protein MdtD from Escherichia coli O45:K1 (strain S88 / ExPEC).